Reading from the N-terminus, the 233-residue chain is Probable F-box protein At3g56670 (233 aa).

In terms of domain architecture, F-box spans 22–69; that stretch reads HGGVIDIPLNTDSGVTKNTPGEIALLRFKSVSKLWSSIISSRRDFIES.

This chain is Probable F-box protein At3g56670, found in Arabidopsis thaliana (Mouse-ear cress).